The chain runs to 141 residues: Large ribosomal subunit protein uL11 (141 aa).

Belongs to the universal ribosomal protein uL11 family. Part of the ribosomal stalk of the 50S ribosomal subunit. Interacts with L10 and the large rRNA to form the base of the stalk. L10 forms an elongated spine to which L12 dimers bind in a sequential fashion forming a multimeric L10(L12)X complex. One or more lysine residues are methylated.

In terms of biological role, forms part of the ribosomal stalk which helps the ribosome interact with GTP-bound translation factors. The protein is Large ribosomal subunit protein uL11 of Ruegeria pomeroyi (strain ATCC 700808 / DSM 15171 / DSS-3) (Silicibacter pomeroyi).